The sequence spans 1186 residues: MGVQGLWKLLECSGRQVSPEALEGKILAVDISIWLNQALKGVRDRHGNSIENPHLLTLFHRLCKLLFFRIRPIFVFDGDAPLLKKQTLVKRRQRKDLASSDSRKTTEKLLKTFLKRQAIKTAFRSKRDEALPSLTQVRRENDLYVLPPLQEEEKHSSEEEDEKEWQERMNQKQALQEEFFHNPQAIDIESEDFSSLPPEVKHEILTDMKEFTKRRRTLFEAMPEESDDFSQYQLKGLLKKNYLNQHIEHVQKEMNQQHSGHIRRQYEDEGGFLKEVESRRVVSEDTSHYILIKGIQAKTVAEVDSESLPSSSKMHGMSFDVKSSPCEKLKTEKEPDATPPSPRTLLAMQAALLGSSSEEELESENRRQARGRNAPAAVDEGSISPRTLSAIKRALDDDEDVKVCAGDDVQTGGPGAEEMRINSSTENSDEGLKVRDGKGIPFTATLASSSVNSAEEHVASTNEGREPTDSVPKEQMSLVHVGTEAFPISDESMIKDRKDRLPLESAVVRHSDAPGLPNGRELTPASPTCTNSVSKNETHAEVLEQQNELCPYESKFDSSLLSSDDETKCKPNSASEVIGPVSLQETSSIVSVPSEAVDNVENVVSFNAKEHENFLETIQEQQTTESAGQDLISIPKAVEPMEIDSEESESDGSFIEVQSVISDEELQAEFPETSKPPSEQGEEELVGTREGEAPAESESLLRDNSERDDVDGEPQEAEKDAEDSLHEWQDINLEELETLESNLLAQQNSLKAQKQQQERIAATVTGQMFLESQELLRLFGIPYIQAPMEAEAQCAILDLTDQTSGTITDDSDIWLFGARHVYRNFFNKNKFVEYYQYVDFHNQLGLDRNKLINLAYLLGSDYTEGIPTVGCVTAMEILNEFPGHGLEPLLKFSEWWHEAQKNPKIRPNPHDTKVKKKLRTLQLTPGFPNPAVAEAYLKPVVDDSKGSFLWGKPDLDKIREFCQRYFGWNRTKTDESLFPVLKQLDAQQTQLRIDSFFRLAQQEKEDAKRIKSQRLNRAVTCMLRKEKEAAASEIEAVSVAMEKEFELLDKAKGKTQKRGITNTLEESSSLKRKRLSDSKGKNTCGGFLGETCLSESSDGSSSEDAESSSLMNVQRRTAAKEPKTSASDSQNSVKEAPVKNGGATTSSSSDSDDDGGKEKMVLVTARSVFGKKRRKLRRARGRKRKT.

Positions 1–78 (MGVQGLWKLL…RIRPIFVFDG (78 aa)) are N-domain. The residue at position 8 (Lys-8) is an N6-acetyllysine. Mg(2+) is bound at residue Asp-30. The tract at residues 31–67 (ISIWLNQALKGVRDRHGNSIENPHLLTLFHRLCKLLF) is DNA-binding; may bind to the undamaged single-strand DNA of the DNA repair bubble. Asp-77 is a Mg(2+) binding site. Positions 79–785 (DAPLLKKQTL…LRLFGIPYIQ (707 aa)) are spacer region. Disordered regions lie at residues 306–342 (ESLP…PPSP), 354–385 (GSSS…SISP), 404–473 (CAGD…SVPK), 510–533 (HSDA…TNSV), and 667–724 (QAEF…AEDS). A compositionally biased stretch (basic and acidic residues) spans 325-336 (PCEKLKTEKEPD). Ser-384 carries the phosphoserine modification. A compositionally biased stretch (basic and acidic residues) spans 454-472 (AEEHVASTNEGREPTDSVP). Ser-705 is subject to Phosphoserine. The segment at 786–881 (APMEAEAQCA…VTAMEILNEF (96 aa)) is I-domain. Mg(2+)-binding residues include Glu-789, Glu-791, Asp-810, and Asp-812. The interval 820–836 (HVYRNFFNKNKFVEYYQ) is DNA-binding; may bind to the undamaged single-strand DNA of the DNA repair bubble. Residues 848 to 880 (RNKLINLAYLLGSDYTEGIPTVGCVTAMEILNE) are DNA-binding; H2TH (helix-2turn-helix) motif which binds double-stranded DNA. Asp-861 serves as a coordination point for Mg(2+). The interval 912 to 918 (TKVKKKL) is DNA-binding; may bind double-stranded DNA. An interaction with PCNA region spans residues 981 to 1009 (LKQLDAQQTQLRIDSFFRLAQQEKEDAKR). The segment at 1011 to 1186 (KSQRLNRAVT…RRARGRKRKT (176 aa)) is interaction with ERCC6/CSB. Disordered regions lie at residues 1056 to 1081 (QKRG…SKGK) and 1095 to 1186 (ESSD…KRKT). The Nuclear localization signal 1 signature appears at 1057–1074 (KRGITNTLEESSSLKRKR). Residues 1124–1133 (TSASDSQNSV) show a composition bias toward polar residues. A Nuclear localization signal 2 motif is present at residues 1169-1186 (FGKKRRKLRRARGRKRKT). The span at 1169–1186 (FGKKRRKLRRARGRKRKT) shows a compositional bias: basic residues.

It belongs to the XPG/RAD2 endonuclease family. XPG subfamily. In terms of assembly, monomer. Homodimer. Component of the homologous recombination repair (HR) complex composed of ERCC5/XPG, BRCA2, PALB2, DSS1 and RAD51. Within the complex, interacts with BRCA2 and PALB2. Interacts with RNA polymerase II. Interacts (via C-terminus) with ERCC6/CSB; the interaction stimulates ERCC6/CSB binding to the DNA repair bubble and ERCC6/CSB ATPase activity. May form a complex composed of RNA polymerase II, ERCC6/CSB and ERCC5/XPG which associates with the DNA repair bubble during transcription-coupled nucleotide excision repair. Interacts with BRCA1; the interaction promotes the release of BRCA1 from DNA. Interacts with PCNA. Interacts with NTHL1; the interaction stimulates NTHL1 activity and NTHL1 binding to its DNA substrate. It depends on Mg(2+) as a cofactor.

It is found in the nucleus. The protein localises to the chromosome. Its function is as follows. Single-stranded structure-specific DNA endonuclease involved in DNA excision repair. Makes the 3'incision in DNA nucleotide excision repair (NER). Binds and bends DNA repair bubble substrate and breaks base stacking at the single-strand/double-strand DNA junction of the DNA bubble. Plays a role in base excision repair (BER) by promoting the binding of DNA glycosylase NTHL1 to its substrate and increasing NTHL1 catalytic activity that removes oxidized pyrimidines from DNA. Involved in transcription-coupled nucleotide excision repair (TCR) which allows RNA polymerase II-blocking lesions to be rapidly removed from the transcribed strand of active genes. Functions during the initial step of TCR in cooperation with ERCC6/CSB to recognized stalled RNA polymerase II. Also, stimulates ERCC6/CSB binding to the DNA repair bubble and ERCC6/CSB ATPase activity. Required for DNA replication fork maintenance and preservation of genomic stability. Involved in homologous recombination repair (HRR) induced by DNA replication stress by recruiting RAD51, BRCA2, and PALB2 to the damaged DNA site. In TFIIH stimulates the 5'-3' helicase activity of XPD/ERCC2 and the DNA translocase activity of XPB/ERCC3. During HRR, binds to the replication fork with high specificity and stabilizes it. Also, acts upstream of HRR, to promote the release of BRCA1 from DNA. This chain is DNA excision repair protein ERCC-5 (ERCC5), found in Homo sapiens (Human).